We begin with the raw amino-acid sequence, 89 residues long: MSLSTEKKAAIVAEFGRDAKDTGSSEVQIALLTAQINHLQAHFSTHKKDHHGRRGLLRMVSRRRKLLDYLKRTDLAKYSEIIARLGLRR.

The protein belongs to the universal ribosomal protein uS15 family. As to quaternary structure, part of the 30S ribosomal subunit. Forms a bridge to the 50S subunit in the 70S ribosome, contacting the 23S rRNA.

Its function is as follows. One of the primary rRNA binding proteins, it binds directly to 16S rRNA where it helps nucleate assembly of the platform of the 30S subunit by binding and bridging several RNA helices of the 16S rRNA. Functionally, forms an intersubunit bridge (bridge B4) with the 23S rRNA of the 50S subunit in the ribosome. This chain is Small ribosomal subunit protein uS15, found in Histophilus somni (strain 129Pt) (Haemophilus somnus).